We begin with the raw amino-acid sequence, 382 residues long: MIASTGKTNLLGLTQQEMEKFFDSIGEKRFRAGQVMKWIHHFGVDDFDAMTNVSKALREKLKACAEVRGPEVVSEDISSDGTRKWVVRVESGSCVETVYIPQGKRGTLCVSSQAGCALDCSFCSTGKQGFNSNLTAAEVIGQVWIANKSFGSVPATVDRAITNVVMMGMGEPLLNFDNVIAAMHLMMDDLGYGISKRRVTLSTSGVVPMIDELSKHIDVSLALSLHAPNDALRNQLVPINKKYPLQMLLDSCRRYMSSLGEKRVLTIEYTMLKDINDKVEHAVEMIELLKDTPCKINLIPFNPFPHSGYERPSNNAIRRFQDLLHQAGYNVTVRTTRGEDIDAACGQLVGQVMDRTRRSERYIAVRELSAEAETAPVAATRT.

The Proton acceptor role is filled by Glu-96. Residues 102 to 342 enclose the Radical SAM core domain; sequence QGKRGTLCVS…VRTTRGEDID (241 aa). Cys-109 and Cys-345 are oxidised to a cystine. 3 residues coordinate [4Fe-4S] cluster: Cys-116, Cys-120, and Cys-123. Residues 170 to 171, Ser-202, 224 to 226, and Asn-302 each bind S-adenosyl-L-methionine; these read GE and SLH. Residue Cys-345 is the S-methylcysteine intermediate of the active site.

The protein belongs to the radical SAM superfamily. RlmN family. It depends on [4Fe-4S] cluster as a cofactor.

The protein resides in the cytoplasm. The catalysed reaction is adenosine(2503) in 23S rRNA + 2 reduced [2Fe-2S]-[ferredoxin] + 2 S-adenosyl-L-methionine = 2-methyladenosine(2503) in 23S rRNA + 5'-deoxyadenosine + L-methionine + 2 oxidized [2Fe-2S]-[ferredoxin] + S-adenosyl-L-homocysteine. The enzyme catalyses adenosine(37) in tRNA + 2 reduced [2Fe-2S]-[ferredoxin] + 2 S-adenosyl-L-methionine = 2-methyladenosine(37) in tRNA + 5'-deoxyadenosine + L-methionine + 2 oxidized [2Fe-2S]-[ferredoxin] + S-adenosyl-L-homocysteine. Functionally, specifically methylates position 2 of adenine 2503 in 23S rRNA and position 2 of adenine 37 in tRNAs. m2A2503 modification seems to play a crucial role in the proofreading step occurring at the peptidyl transferase center and thus would serve to optimize ribosomal fidelity. This is Dual-specificity RNA methyltransferase RlmN from Pseudomonas savastanoi pv. phaseolicola (strain 1448A / Race 6) (Pseudomonas syringae pv. phaseolicola (strain 1448A / Race 6)).